Consider the following 477-residue polypeptide: ATP synthase subunit beta (477 aa).

An ATP-binding site is contributed by 148 to 155 (GGAGVGKT).

This sequence belongs to the ATPase alpha/beta chains family. As to quaternary structure, F-type ATPases have 2 components, CF(1) - the catalytic core - and CF(0) - the membrane proton channel. CF(1) has five subunits: alpha(3), beta(3), gamma(1), delta(1), epsilon(1). CF(0) has three main subunits: a(1), b(2) and c(9-12). The alpha and beta chains form an alternating ring which encloses part of the gamma chain. CF(1) is attached to CF(0) by a central stalk formed by the gamma and epsilon chains, while a peripheral stalk is formed by the delta and b chains.

The protein localises to the cell inner membrane. The enzyme catalyses ATP + H2O + 4 H(+)(in) = ADP + phosphate + 5 H(+)(out). Functionally, produces ATP from ADP in the presence of a proton gradient across the membrane. The catalytic sites are hosted primarily by the beta subunits. The polypeptide is ATP synthase subunit beta (Psychrobacter arcticus (strain DSM 17307 / VKM B-2377 / 273-4)).